The primary structure comprises 280 residues: uncharacterized protein (280 aa).

The active-site Proton donor is Tyr54. Residue His116 coordinates substrate. 194–246 provides a ligand contact to NADP(+); the sequence is SPLMQGQLLDHPVLADIAQTYNKSVAQIILRWDLQHGIITIPKSTKEHRIKEN.

The protein belongs to the aldo/keto reductase family.

This is an uncharacterized protein from Bacillus subtilis (strain 168).